The following is a 173-amino-acid chain: Ribosome maturation factor RimM (173 aa).

The 74-residue stretch at 92 to 165 folds into the PRC barrel domain; sequence EGEFYHADLI…RVVIEMPGEI (74 aa).

This sequence belongs to the RimM family. In terms of assembly, binds ribosomal protein uS19.

It localises to the cytoplasm. Functionally, an accessory protein needed during the final step in the assembly of 30S ribosomal subunit, possibly for assembly of the head region. Essential for efficient processing of 16S rRNA. May be needed both before and after RbfA during the maturation of 16S rRNA. It has affinity for free ribosomal 30S subunits but not for 70S ribosomes. The protein is Ribosome maturation factor RimM of Nitrobacter hamburgensis (strain DSM 10229 / NCIMB 13809 / X14).